The sequence spans 347 residues: Sulfate/thiosulfate import ATP-binding protein CysA 1 (347 aa).

The ABC transporter domain occupies 3–237 (VRVESLRKEF…PVSPFVYGFI (235 aa)). 35-42 (GPSGSGKT) contributes to the ATP binding site.

The protein belongs to the ABC transporter superfamily. Sulfate/tungstate importer (TC 3.A.1.6) family. As to quaternary structure, the complex is composed of two ATP-binding proteins (CysA), two transmembrane proteins (CysT and CysW) and a solute-binding protein (CysP).

It localises to the cell inner membrane. It carries out the reaction sulfate(out) + ATP + H2O = sulfate(in) + ADP + phosphate + H(+). The catalysed reaction is thiosulfate(out) + ATP + H2O = thiosulfate(in) + ADP + phosphate + H(+). Its function is as follows. Part of the ABC transporter complex CysAWTP involved in sulfate/thiosulfate import. Responsible for energy coupling to the transport system. The chain is Sulfate/thiosulfate import ATP-binding protein CysA 1 from Rhizobium meliloti (strain 1021) (Ensifer meliloti).